Here is a 447-residue protein sequence, read N- to C-terminus: NAC domain containing protein 50 (447 aa).

The disordered stretch occupies residues 1–21 (MGRESLAVVSSPPSATAPSTA). Residues 27-178 (LAPGFRFHPT…AYVLCRVFHK (152 aa)) form the NAC domain. The DNA-binding element occupies 126–184 (LGMKKTLVFHSGRAPDGLRTNWVMHEYRLVEYETETNGSLLQDAYVLCRVFHKNNIGPP). Disordered regions lie at residues 246-303 (DATP…NKEA) and 371-392 (KENQ…EEKV). Residues 281–293 (TLKREHAEEDERP) show a composition bias toward basic and acidic residues. Positions 392–447 (VNDLQKEVHQMSVERETFKLEMMSAEAMISILQSRIDALRQENEELKKKNASGQAS) form a coiled coil.

As to quaternary structure, interacts with JMJ14 and NAC052. Mostly expressed in floral organs, and, at low levels, in other organs.

It localises to the nucleus. Its function is as follows. Transcriptional repressor that binds to the motif 5'-(C/T)A(C/A)G-3' in the promoter of target genes. Also binds to the 5'-CTTGNNNNNCAAG-3' consensus sequence in chromatin. Can bind to the mitochondrial dysfunction motif (MDM) present in the upstream regions of mitochondrial dysfunction stimulon (MDS) genes involved in mitochondrial retrograde regulation (MRR). Together with NAC051/NAC052 and JMJ14, regulates gene expression and flowering time by associating with the histone demethylase JMJ14, probably by the promotion of RNA-mediated gene silencing. The protein is NAC domain containing protein 50 of Arabidopsis thaliana (Mouse-ear cress).